Consider the following 242-residue polypeptide: ATP synthase subunit a (242 aa).

A run of 6 helical transmembrane segments spans residues 29–49 (SSIY…LAFY), 84–104 (FIPL…LGMT), 114–134 (IIVT…VGFI), 140–160 (FLTL…MIVI), 181–201 (MAGH…MIYL), and 203–223 (FLPI…AILQ).

Belongs to the ATPase A chain family. F-type ATPases have 2 components, CF(1) - the catalytic core - and CF(0) - the membrane proton channel. CF(1) has five subunits: alpha(3), beta(3), gamma(1), delta(1), epsilon(1). CF(0) has three main subunits: a(1), b(2) and c(9-12). The alpha and beta chains form an alternating ring which encloses part of the gamma chain. CF(1) is attached to CF(0) by a central stalk formed by the gamma and epsilon chains, while a peripheral stalk is formed by the delta and b chains.

Its subcellular location is the cell inner membrane. Functionally, key component of the proton channel; it plays a direct role in the translocation of protons across the membrane. This Rickettsia typhi (strain ATCC VR-144 / Wilmington) protein is ATP synthase subunit a.